We begin with the raw amino-acid sequence, 283 residues long: Protein FAM78A (283 aa).

Belongs to the FAM78 family.

The protein is Protein FAM78A (Fam78a) of Mus musculus (Mouse).